Consider the following 404-residue polypeptide: RING-H2 finger protein ATL11 (404 aa).

An N-terminal signal peptide occupies residues 1-36 (MNPKGRTNLNRSIIGGHDHGSILQLLLFLLLLSSHG). The helical transmembrane segment at 64–84 (AILMIVLVSVFFFLGFFSVYI) threads the bilayer. The RING-type; atypical zinc finger occupies 144–186 (CSVCLNEFEDDETLRLIPKCCHVFHPGCIDAWLRSHTTCPLCR). Disordered stretches follow at residues 339-361 (PYRTSSINHMSPGGSGGDKVRAS) and 385-404 (VGENSSDHLRSCDATPSNTV).

This sequence belongs to the RING-type zinc finger family. ATL subfamily.

It localises to the membrane. It carries out the reaction S-ubiquitinyl-[E2 ubiquitin-conjugating enzyme]-L-cysteine + [acceptor protein]-L-lysine = [E2 ubiquitin-conjugating enzyme]-L-cysteine + N(6)-ubiquitinyl-[acceptor protein]-L-lysine.. The protein operates within protein modification; protein ubiquitination. This Arabidopsis thaliana (Mouse-ear cress) protein is RING-H2 finger protein ATL11 (ATL11).